We begin with the raw amino-acid sequence, 213 residues long: MTKGSVFIIMGPPGSGKGTQSQYLANRIGLPHISTGDLLRAIIREGTPNGLKAKAYLDKGAFVPSDFVWEILKEKLQSQACSKGCIIDGFPRTLDQAHLLDSFLMDVHSNYTVIFLEISEDEILKRVCSRFLCPSCSRIYNTSQGHTECPDCHVPLIRRSDDTPEIIKERLTKYQERTAPVIAYYDSLGKLCRVSSENKEDLVFEDILKCIYK.

14–19 serves as a coordination point for ATP; the sequence is GSGKGT. The tract at residues 34–63 is NMP; it reads STGDLLRAIIREGTPNGLKAKAYLDKGAFV. Residues T35, R40, 61 to 63, 89 to 92, and Q96 contribute to the AMP site; these read AFV and GFPR. The LID stretch occupies residues 129 to 162; it reads SRFLCPSCSRIYNTSQGHTECPDCHVPLIRRSDD. Position 130 (R130) interacts with ATP. C133 and C136 together coordinate Zn(2+). 139–140 is a binding site for ATP; that stretch reads IY. Zn(2+)-binding residues include C149 and C152. AMP contacts are provided by R159 and R170. N198 serves as a coordination point for ATP.

Belongs to the adenylate kinase family. Monomer.

Its subcellular location is the cytoplasm. The enzyme catalyses AMP + ATP = 2 ADP. The protein operates within purine metabolism; AMP biosynthesis via salvage pathway; AMP from ADP: step 1/1. Functionally, catalyzes the reversible transfer of the terminal phosphate group between ATP and AMP. Plays an important role in cellular energy homeostasis and in adenine nucleotide metabolism. In Chlamydia pneumoniae (Chlamydophila pneumoniae), this protein is Adenylate kinase.